A 270-amino-acid polypeptide reads, in one-letter code: Phosphatidylinositol transfer protein alpha isoform (270 aa).

A 1,2-diacyl-sn-glycero-3-phospho-(1D-myo-inositol) contacts are provided by Thr-58, Lys-60, Glu-85, Asn-89, Thr-96, and Lys-194. Lys-215 is subject to N6-acetyllysine. A compositionally biased stretch (basic and acidic residues) spans 250–263 (TKRQLDEMRQKDPV). Residues 250–270 (TKRQLDEMRQKDPVKGMTADD) are disordered.

Belongs to the PtdIns transfer protein family. PI transfer class I subfamily. Post-translationally, phosphorylated by PKC in a calcium and phosphatidylserine-dependent manner.

It is found in the cytoplasm. It localises to the nucleus. It catalyses the reaction a 1,2-diacyl-sn-glycero-3-phosphocholine(in) = a 1,2-diacyl-sn-glycero-3-phosphocholine(out). The enzyme catalyses a 1,2-diacyl-sn-glycero-3-phospho-(1D-myo-inositol)(in) = a 1,2-diacyl-sn-glycero-3-phospho-(1D-myo-inositol)(out). In terms of biological role, catalyzes the transfer of phosphatidylinositol (PI) and phosphatidylcholine (PC) between membranes. Shows a preference for PI and PC containing shorter saturated or monosaturated acyl chains at the sn-1 and sn-2 positions. Preference order for PC is C16:1 &gt; C16:0 &gt; C18:1 &gt; C18:0 &gt; C20:4 and for PI is C16:1 &gt; C16:0 &gt; C18:1 &gt; C18:0 &gt; C20:4 &gt; C20:3. This chain is Phosphatidylinositol transfer protein alpha isoform (PITPNA), found in Oryctolagus cuniculus (Rabbit).